We begin with the raw amino-acid sequence, 313 residues long: UPF0252 protein AF_0384 (313 aa).

The protein belongs to the UPF0252 family.

The sequence is that of UPF0252 protein AF_0384 from Archaeoglobus fulgidus (strain ATCC 49558 / DSM 4304 / JCM 9628 / NBRC 100126 / VC-16).